Here is a 597-residue protein sequence, read N- to C-terminus: MKNIRNFSIIAHIDHGKSTLADRIIQLCGGLSDREMEAQVLDSMDIERERGITIKAQTAALEYKALDGQVYNLNLIDTPGHVDFSYEVSRSLAACEGALLVVDASQGVEAQSVANCYTAIDQGVEVVPVLNKIDLPAADPERVMQEIEDVIGVDASEAVRCSAKTGVGVQDVLETMIAKIPPPVGDPEKPLKALIIDSWFDNYVGVIMLVRVVDGVLKPKDKIRMMATKATYLCEQVGVFTPKSRPRASLSAGEVGFIIAGIKELTSAKVGDTVTLADRPASEALPGFKEVKPQVFAGLYPVESNQFEALREALEKLRLNDASLQFEPENSSALGFGFRCGFLGLLHMEIVQERLEREYDMDLITTAPTVVYELLLKSGEVVQIENPSRLPEPSRITEIREPIITINLLMPQDYVGPVMTLCNNKRGVQRNMQYMGRQVMLSYEMPLNEVVLDFFDRLKSVSRGYASMDYEFLEFRAADLVKLDIMVNGERVDALSLIVHRSNSVYRGRELVSKMRELIPRQMFDIAVQASIGANIIARETVKAMRKNVLAKCYGGDITRKKKLLEKQKEGKKRMKQVGNVEIPQEAFLAILRVEDK.

In terms of domain architecture, tr-type G spans K2–V184. GTP-binding positions include D14 to T19 and N131 to D134.

This sequence belongs to the TRAFAC class translation factor GTPase superfamily. Classic translation factor GTPase family. LepA subfamily.

It localises to the cell inner membrane. It carries out the reaction GTP + H2O = GDP + phosphate + H(+). Functionally, required for accurate and efficient protein synthesis under certain stress conditions. May act as a fidelity factor of the translation reaction, by catalyzing a one-codon backward translocation of tRNAs on improperly translocated ribosomes. Back-translocation proceeds from a post-translocation (POST) complex to a pre-translocation (PRE) complex, thus giving elongation factor G a second chance to translocate the tRNAs correctly. Binds to ribosomes in a GTP-dependent manner. This Methylobacillus flagellatus (strain ATCC 51484 / DSM 6875 / VKM B-1610 / KT) protein is Elongation factor 4.